The sequence spans 505 residues: Maturase K (505 aa).

The protein belongs to the intron maturase 2 family. MatK subfamily.

Its subcellular location is the plastid. The protein resides in the chloroplast. Functionally, usually encoded in the trnK tRNA gene intron. Probably assists in splicing its own and other chloroplast group II introns. This chain is Maturase K, found in Physcomitrium patens (Spreading-leaved earth moss).